The following is a 341-amino-acid chain: Glucokinase (341 aa).

18–23 (GDIGGT) serves as a coordination point for ATP.

This sequence belongs to the bacterial glucokinase family.

It localises to the cytoplasm. The catalysed reaction is D-glucose + ATP = D-glucose 6-phosphate + ADP + H(+). This Rhizobium leguminosarum bv. trifolii (strain WSM2304) protein is Glucokinase.